A 414-amino-acid polypeptide reads, in one-letter code: Serine hydroxymethyltransferase (414 aa).

(6S)-5,6,7,8-tetrahydrofolate is bound by residues Leu117 and 121-123 (GHL). Position 226 is an N6-(pyridoxal phosphate)lysine (Lys226). 349–351 (SPF) contributes to the (6S)-5,6,7,8-tetrahydrofolate binding site.

Belongs to the SHMT family. Homodimer. Pyridoxal 5'-phosphate is required as a cofactor.

It is found in the cytoplasm. The catalysed reaction is (6R)-5,10-methylene-5,6,7,8-tetrahydrofolate + glycine + H2O = (6S)-5,6,7,8-tetrahydrofolate + L-serine. The protein operates within one-carbon metabolism; tetrahydrofolate interconversion. It participates in amino-acid biosynthesis; glycine biosynthesis; glycine from L-serine: step 1/1. In terms of biological role, catalyzes the reversible interconversion of serine and glycine with tetrahydrofolate (THF) serving as the one-carbon carrier. Also exhibits THF-independent aldolase activity toward beta-hydroxyamino acids, producing glycine and aldehydes, via a retro-aldol mechanism. The polypeptide is Serine hydroxymethyltransferase (Methanospirillum hungatei JF-1 (strain ATCC 27890 / DSM 864 / NBRC 100397 / JF-1)).